The following is a 238-amino-acid chain: uncharacterized protein (238 aa).

This is an uncharacterized protein from Rickettsia prowazekii (strain Madrid E).